A 1648-amino-acid polypeptide reads, in one-letter code: MRFAVLLALFGLALAARQSSVSEQYYRSGREYRYQFNGHLSAGLPIPGEENSATRIQSLIRIQPENGDFMRLQMTKTRFATSEEDRVLSFENMNEVPVSEKVEKVLSLPIRFSYRHGMVGEIEFSTEEQTWSSNIKKAVVNMLQVNLVKKGMSEKNEYETEHDNDFFLSNERTLEGECEVAYTKIEKSEKEQQWTKSINFEKCSLRPEIVYGRRYAEECNECRERDEKFSSTVFFYNITGTPEEFLINSVELQSKHMFAPVTEQKQLITARITNRLELVYSGEQKEQIEAVRNSDKKENLLYNPEHEIAEEKFAQTGDEKYLRRIPNYVDQGEIIRQQLNRLSKQTEQIELESNHVHARLVKSLRFATEDNLSSIRSLVSQKSEVVQSLYWDALAIAGTKVTVSHLLEKINNKEISPMKASQLMKILAEVRIPSEQIAQELHRFCESDIVSRSAVLRQSCWLSYGSVLNGVCGQTKNVYGSEITETRKQCTRQMKEKYIRELIEKMNQAESRYEKVLFVKAIANAGIDTSVVELEKIIRNQEVEKTVRMQAIDALRRLRLSMPKKIQNVLMPVYRNHKETPGIRISALHMIMQTQPTSGVLDMIVRGLEKERSQQVRVYTWSTLKTLSESENPAEKEIRRRVSQSLASIPVEEQKYLESKHKTFNWFNMQSGATLNWATIFSNDSVLPKEITASLETVFGGEWNKYLAQIGLYQNNLDSVLSKLLQKVEETGLEQLVVRGKRSSSFFRPAEMLRSLVESLRISHRQVPAMSPIAMIYLRYKDQDYAFLPIDIDTLPEMIRRVARDGQLDLSEIEKVLTQAARFTVAGSAFFHETVRKVPSALGMPQVMTSKMPTVAQMNGEVKFDLEPLNSDKFTGLRLRVKAEPHVASTHVCKLELFTPIGGQGIKLLHGGRIQAPIDSEIEINWEKKLIVKATIKSPEQKRHIAHFMTRPVLFSREVTMDKQMRQYPEPREKTIQLRENRFPIHAFERQYFEQTGLKMTVSGHYRRPFTTAFTLGESIMMSSSSLPRMLSLKEVVAYMSFSGFEETEMDEPRLLNRFYEKETELFETEKNVEYEQEDKEPKSSQLQSQIRKVKSEGKAYKHRVHMKIHTVGGPKTQEAECEIRALCDERVRFCRLNLDASRSPIQGESRQWQLKSSAEWLYPEVPSTMKKMLESRREWNAMWTGKWGSEKQNEVTIRVQGEQSSEQKFWMKKAEREQSPLTSGGQASRAAQLNQYNIHATYEVTPETEFWMENVYSMFKTYYFFSAEVQPKQNKENRIQCQITLEPFTRQLFNVTVMSPKEKLVLELENQQTPFRLPAVNIGREFGRVQSVRHVVKAVERQTRPECIVKSKEIQTFDEVFYRTPVMECFSVLAKDCSENPDFAVLMRKVSKRGEEKMWKVISRENVIELEKKSEEMSVRVNGKEISEDKWEDFGISQRGEEKFFIDAEKVTVEFDGFQAKIQMSSLYKNKQCGLCGHYDGEKTNEFRRADNEETDDIEEFSRSYLSKDDECEVDEQEMTNKRNYKVLREETSSSEEISESLIELYSEAFQSREAHHRLGRREDRQVCFSQQAWNKCLKSKDNKTETKNVHFKCLTETTRSPRISSVFSQADISENLSDVEGLPSLAEPSPHSRFLPCVIPSLSLSQ.

Positions 1–15 (MRFAVLLALFGLALA) are cleaved as a signal peptide. A Vitellogenin domain is found at 26–691 (YRSGREYRYQ…SNDSVLPKEI (666 aa)). Cystine bridges form between Cys178–Cys203 and Cys219–Cys222. Residues Asn237, Asn371, and Asn683 are each glycosylated (N-linked (GlcNAc...) asparagine). The segment at 1070-1092 (EKNVEYEQEDKEPKSSQLQSQIR) is disordered. N-linked (GlcNAc...) asparagine glycosylation is present at Asn1295. The 169-residue stretch at 1346 to 1514 (PECIVKSKEI…SYLSKDDECE (169 aa)) folds into the VWFD domain. Cystine bridges form between Cys1348/Cys1477 and Cys1370/Cys1513. Residues Asn1584 and Asn1617 are each glycosylated (N-linked (GlcNAc...) asparagine).

Post-translationally, the precursor protein is probably further processed into vitellin polypeptides VT2 and VT3. In terms of processing, both VT2 and VT3 polypeptides seem to be N-glycosylated.

It is found in the secreted. In terms of biological role, precursor of the egg-yolk proteins that are sources of nutrients during embryonic development. The protein is Vitellogenin-6 (vit-6) of Oscheius tipulae.